Consider the following 788-residue polypeptide: Multi-functional prenyltransferase ltmE (788 aa).

Positions 18 and 51 each coordinate substrate. Residue Asp58 participates in Mg(2+) binding. Substrate is bound by residues Arg67, Lys151, Thr152, Gln182, Asn189, and Lys199. Positions 283-337 (DTLDGDDLTRPSTITQHEQDDHVDRAAIDAKSDASGSSNKSLTPPETAPTTDTLS) are disordered. The span at 299–314 (HEQDDHVDRAAIDAKS) shows a compositional bias: basic and acidic residues. Positions 316–337 (ASGSSNKSLTPPETAPTTDTLS) are enriched in polar residues. 404–405 (MA) is an L-tryptophan binding site. The substrate site is built by Arg427, Arg599, Lys601, Tyr603, and Tyr687.

In the N-terminal section; belongs to the FPP/GGPP synthase family. It in the C-terminal section; belongs to the tryptophan dimethylallyltransferase family. Mg(2+) serves as cofactor.

It participates in secondary metabolite biosynthesis. Functionally, multi-functional prenyltransferase; part of the gene cluster that mediates the biosynthesis of lolitrems, indole-diterpene mycotoxins that are potent tremorgens in mammals, and are synthesized by clavicipitaceous fungal endophytes in association with their grass hosts. The geranylgeranyl diphosphate (GGPP) synthase ltmG is proposed to catalyze the first step in lolitrem biosynthesis. LtmG catalyzes a series of iterative condensations of isopentenyl diphosphate (IPP) with dimethylallyl diphosphate (DMAPP), geranyl diphosphate (GPP), and farnesyl diphosphate (FPP), to form GGPP. GGPP then condenses with indole-3-glycerol phosphate to form 3-geranylgeranylindole, an acyclic intermediate, to be incorporated into paxilline. Either ltmG or ltmC could be responsible for this step, as both are putative prenyl transferases. The FAD-dependent monooxygenase ltmM then catalyzes the epoxidation of the two terminal alkenes of the geranylgeranyl moiety, which is subsequently cyclized by ltmB, to paspaline. The cytochrome P450 monooxygenases ltmQ and ltmP can sequentially oxidize paspaline to terpendole E and terpendole F. Alternatively, ltmP converts paspaline to an intermediate which is oxidized by ltmQ to terpendole F. LtmF, ltmK, ltmE and ltmJ appear to be unique to the epichloe endophytes. The prenyltransferase ltmF is involved in the 27-hydroxyl-O-prenylation. The cytochrome P450 monooxygenase ltmK is required for the oxidative acetal ring formation. The multi-functional prenyltransferase ltmE is required for C20- and C21-prenylations of the indole ring of paspalanes and acts together with the cytochrome P450 monooxygenase ltmJ to yield lolitremanes by multiple oxidations and ring closures. The stereoisomer pairs of lolitriol and lolitrem N or lolitrem B and lolitrem F may be attributed to variations in the way in which ring closure can occur under the action of ltmJ. While the major product of this pathway is lolitrem B, the prenyl transferases and cytochrome P450 monooxygenases identified in this pathway have a remarkable versatility in their regio- and stereo-specificities to generate a diverse range of metabolites that are products of a metabolic grid rather than a linear pathway. The sequence is that of Multi-functional prenyltransferase ltmE from Epichloe festucae var. lolii (Neotyphodium lolii).